Here is a 692-residue protein sequence, read N- to C-terminus: Methionine--tRNA ligase (692 aa).

The 'HIGH' region signature appears at P12 to H22. Zn(2+) is bound by residues C143, C146, C156, and C159. The short motif at K341–S345 is the 'KMSKS' region element. K344 provides a ligand contact to ATP. In terms of domain architecture, tRNA-binding spans D586 to R692.

The protein belongs to the class-I aminoacyl-tRNA synthetase family. MetG type 1 subfamily. In terms of assembly, homodimer. Zn(2+) is required as a cofactor.

It is found in the cytoplasm. The enzyme catalyses tRNA(Met) + L-methionine + ATP = L-methionyl-tRNA(Met) + AMP + diphosphate. Its function is as follows. Is required not only for elongation of protein synthesis but also for the initiation of all mRNA translation through initiator tRNA(fMet) aminoacylation. The chain is Methionine--tRNA ligase from Bordetella pertussis (strain Tohama I / ATCC BAA-589 / NCTC 13251).